Here is a 199-residue protein sequence, read N- to C-terminus: NADH-quinone oxidoreductase subunit C (199 aa).

Belongs to the complex I 30 kDa subunit family. In terms of assembly, NDH-1 is composed of 14 different subunits. Subunits NuoB, C, D, E, F, and G constitute the peripheral sector of the complex.

The protein resides in the cell inner membrane. It carries out the reaction a quinone + NADH + 5 H(+)(in) = a quinol + NAD(+) + 4 H(+)(out). Its function is as follows. NDH-1 shuttles electrons from NADH, via FMN and iron-sulfur (Fe-S) centers, to quinones in the respiratory chain. The immediate electron acceptor for the enzyme in this species is believed to be ubiquinone. Couples the redox reaction to proton translocation (for every two electrons transferred, four hydrogen ions are translocated across the cytoplasmic membrane), and thus conserves the redox energy in a proton gradient. This Cupriavidus taiwanensis (strain DSM 17343 / BCRC 17206 / CCUG 44338 / CIP 107171 / LMG 19424 / R1) (Ralstonia taiwanensis (strain LMG 19424)) protein is NADH-quinone oxidoreductase subunit C.